We begin with the raw amino-acid sequence, 194 residues long: 3-isopropylmalate dehydratase small subunit (194 aa).

This sequence belongs to the LeuD family. LeuD type 1 subfamily. Heterodimer of LeuC and LeuD.

It carries out the reaction (2R,3S)-3-isopropylmalate = (2S)-2-isopropylmalate. The protein operates within amino-acid biosynthesis; L-leucine biosynthesis; L-leucine from 3-methyl-2-oxobutanoate: step 2/4. Its function is as follows. Catalyzes the isomerization between 2-isopropylmalate and 3-isopropylmalate, via the formation of 2-isopropylmaleate. The polypeptide is 3-isopropylmalate dehydratase small subunit (Anoxybacillus flavithermus (strain DSM 21510 / WK1)).